Consider the following 780-residue polypeptide: Cullin-5 (780 aa).

The residue at position 34 (Ser-34) is a Phosphoserine. Phosphothreonine is present on Thr-210. The region spanning Arg-711–Asp-772 is the Cullin neddylation domain. A Glycyl lysine isopeptide (Lys-Gly) (interchain with G-Cter in NEDD8) cross-link involves residue Lys-724.

The protein belongs to the cullin family. As to quaternary structure, component of multiple cullin-5-RING E3 ubiquitin-protein ligase complexes (ECS complexes, also named CRL5 complexes) formed of CUL5, Elongin BC (ELOB and ELOC), RNF7/RBX2 and a variable SOCS box domain-containing protein as substrate-specific recognition component. CUL5-containing ECS complexes specifically contain RNF7/RBX2, and not RBX1, as catalytic subunit. Component of the ECS(ASB2) complex with the substrate recognition component ASB2. Component of the ECS(ASB6) complex with the substrate recognition component ASB6. Component of the ECS(ASB7) complex with the substrate recognition component ASB7. Component of the ECS(ASB9) complex with the substrate recognition component ASB9. Component of the ECS(ASB11) complex with the substrate recognition component ASB11. Component of the ECS(ASB12) complex with the substrate recognition component ASB12. Component of the ECS(LRRC41) complex with the substrate recognition component LRRC41. Component of the ECS(SOCS1) complex with the substrate recognition component SOCS1. Component of the ECS(SOCS2) complex with the substrate recognition component SOCS2. Component of the ECS(WSB1) complex with the substrate recognition subunit WSB1. Component of the ECS(SOCS3) complex with the substrate recognition component SOCS3. Component of the ECS(SOCS7) complex with the substrate recognition component SOCS7. Component of the ECS(SPSB1) complex with the substrate recognition component SPSB1. Component of the ECS(SPSB3) complex with the substrate recognition component SPSB3. Component of the ECS(SPSB2) complex with the substrate recognition component SPSB2. Component of the ECS(SPSB4) complex with the substrate recognition component SPSB4. Component of the ECS(RAB40) complex with the substrate recognition subunit RAB40A, RAB40B or RAB40C. Component of the ECS(KLHDC1) complex with the substrate recognition component KLHDC1. Component of the ECS(PCMTD1) complex with the substrate recognition subunit PCMTD1. May also form complexes containing RBX1 and ELOA or VHL; additional evidence is however required to confirm this result in vivo. Interacts (when neddylated) with ARIH2; leading to activate the E3 ligase activity of ARIH2. Interacts with ERCC6; the interaction is induced by DNA damaging agents or inhibitors of RNA polymerase II elongation. Interacts with ELOA (via the BC-box). Interacts (unneddylated form) with DCUN1D1, DCUN1D2, DCUN1D3, DCUN1D4 and DCUN1D5; these interactions promote the cullin neddylation. In terms of processing, neddylated; which enhances the ubiquitination activity of ECS complexes and prevents binding of the inhibitor CAND1. Deneddylated via its interaction with the COP9 signalosome (CSN).

It is found in the nucleus. The protein operates within protein modification; protein ubiquitination. Core component of multiple cullin-5-RING E3 ubiquitin-protein ligase complexes (ECS complexes, also named CRL5 complexes), which mediate the ubiquitination and subsequent proteasomal degradation of target proteins. Acts a scaffold protein that contributes to catalysis through positioning of the substrate and the ubiquitin-conjugating enzyme. The functional specificity of the E3 ubiquitin-protein ligase complex depends on the variable SOCS box-containing substrate recognition component. Acts as a key regulator of neuron positioning during cortex development: component of various SOCS-containing ECS complexes, such as the ECS(SOCS7) complex, that regulate reelin signaling by mediating ubiquitination and degradation of DAB1. ECS(SOCS1) seems to direct ubiquitination of JAK2. The ECS(SOCS2) complex mediates the ubiquitination and subsequent proteasomal degradation of phosphorylated EPOR and GHR. The ECS(SPSB3) complex catalyzes ubiquitination of nuclear CGAS. ECS(KLHDC1) complex is part of the DesCEND (destruction via C-end degrons) pathway and mediates ubiquitination and degradation of truncated SELENOS selenoprotein produced by failed UGA/Sec decoding, which ends with a glycine. The ECS(ASB9) complex mediates ubiquitination and degradation of CKB. As part of some ECS complex, promotes 'Lys-11'-linked ubiquitination and degradation of BTRC. As part of a multisubunit ECS complex, polyubiquitinates monoubiquitinated POLR2A. As part of the ECS(RAB40C) complex, mediates ANKRD28 ubiquitination and degradation, thereby regulating protein phosphatase 6 (PP6) complex activity and focal adhesion assembly during cell migration. As part of the ECS(RAB40A) complex, mediates RHOU 'Lys-48'-linked ubiquitination and degradation, thus inhibiting focal adhesion disassembly during cell migration. As part of the ECS(RAB40B) complex, mediates LIMA1/EPLIN and RAP2 ubiquitination, thereby regulating actin cytoskeleton dynamics and stress fiber formation during cell migration. May form a cell surface vasopressin receptor. This is Cullin-5 from Mus musculus (Mouse).